Here is a 225-residue protein sequence, read N- to C-terminus: Enolase-phosphatase E1 (225 aa).

Belongs to the HAD-like hydrolase superfamily. MasA/MtnC family. Monomer. The cofactor is Mg(2+).

It catalyses the reaction 5-methylsulfanyl-2,3-dioxopentyl phosphate + H2O = 1,2-dihydroxy-5-(methylsulfanyl)pent-1-en-3-one + phosphate. It participates in amino-acid biosynthesis; L-methionine biosynthesis via salvage pathway; L-methionine from S-methyl-5-thio-alpha-D-ribose 1-phosphate: step 3/6. The protein operates within amino-acid biosynthesis; L-methionine biosynthesis via salvage pathway; L-methionine from S-methyl-5-thio-alpha-D-ribose 1-phosphate: step 4/6. In terms of biological role, bifunctional enzyme that catalyzes the enolization of 2,3-diketo-5-methylthiopentyl-1-phosphate (DK-MTP-1-P) into the intermediate 2-hydroxy-3-keto-5-methylthiopentenyl-1-phosphate (HK-MTPenyl-1-P), which is then dephosphorylated to form the acireductone 1,2-dihydroxy-3-keto-5-methylthiopentene (DHK-MTPene). In Shewanella loihica (strain ATCC BAA-1088 / PV-4), this protein is Enolase-phosphatase E1.